Consider the following 227-residue polypeptide: Small ribosomal subunit protein uS3 (227 aa).

Residues 39-107 (VREFLMKKLE…PVHINIEEIR (69 aa)) enclose the KH type-2 domain.

This sequence belongs to the universal ribosomal protein uS3 family. Part of the 30S ribosomal subunit. Forms a tight complex with proteins S10 and S14.

Binds the lower part of the 30S subunit head. Binds mRNA in the 70S ribosome, positioning it for translation. The chain is Small ribosomal subunit protein uS3 from Hahella chejuensis (strain KCTC 2396).